We begin with the raw amino-acid sequence, 155 residues long: SsrA-binding protein (155 aa).

This sequence belongs to the SmpB family.

It localises to the cytoplasm. Functionally, required for rescue of stalled ribosomes mediated by trans-translation. Binds to transfer-messenger RNA (tmRNA), required for stable association of tmRNA with ribosomes. tmRNA and SmpB together mimic tRNA shape, replacing the anticodon stem-loop with SmpB. tmRNA is encoded by the ssrA gene; the 2 termini fold to resemble tRNA(Ala) and it encodes a 'tag peptide', a short internal open reading frame. During trans-translation Ala-aminoacylated tmRNA acts like a tRNA, entering the A-site of stalled ribosomes, displacing the stalled mRNA. The ribosome then switches to translate the ORF on the tmRNA; the nascent peptide is terminated with the 'tag peptide' encoded by the tmRNA and targeted for degradation. The ribosome is freed to recommence translation, which seems to be the essential function of trans-translation. This Lawsonia intracellularis (strain PHE/MN1-00) protein is SsrA-binding protein.